Reading from the N-terminus, the 333-residue chain is Probable G-protein coupled receptor 33 (333 aa).

Topologically, residues 1–30 (MDLINSTDYLINASTLVRNSTQFLAPASKM) are extracellular. 3 N-linked (GlcNAc...) asparagine glycosylation sites follow: Asn-5, Asn-12, and Asn-19. Residues 31 to 53 (IIALSLYISSIIGTITNGLYLWV) form a helical membrane-spanning segment. At 54-64 (LRFKMKQTVNT) the chain is on the cytoplasmic side. Residues 65–86 (LLFFHLILSYFISTMILPFMAT) form a helical membrane-spanning segment. The Extracellular segment spans residues 87-103 (SQLQDNHWNFGTALCKV). Cys-101 and Cys-179 are joined by a disulfide. Residues 104 to 124 (FNGTLSLGMFTSVFFLSAIGL) traverse the membrane as a helical segment. Residues 125–143 (DRYLLTLHPVWSQQHRTPR) lie on the Cytoplasmic side of the membrane. A helical transmembrane segment spans residues 144 to 165 (WASSIVLGVWISAAALSIPYLI). Over 166 to 209 (FRETHHDRKGKVTCQNNYAVSTNWESKEMQASRQWIHVACFISR) the chain is Extracellular. The chain crosses the membrane as a helical span at residues 210 to 230 (FLLGFLLPFFIIIFCYERVAS). Topologically, residues 231–246 (KVKERSLFKSSKPFKV) are cytoplasmic. Residues 247 to 268 (MMTAIISFFVCWMPYHIHQGLL) form a helical membrane-spanning segment. Topologically, residues 269–283 (LTTNQSLLLELTLIL) are extracellular. Asn-272 carries an N-linked (GlcNAc...) asparagine glycan. Residues 284–303 (TVLTTSFNTIFSPTLYLFVG) form a helical membrane-spanning segment. The Cytoplasmic portion of the chain corresponds to 304 to 333 (ENFKKVFKKSILALFESTFSEDSSVERTQT).

The protein belongs to the G-protein coupled receptor 1 family. In terms of tissue distribution, expressed in spleen, lung, heart, liver, kidney, pancreas, thymus, gonads and leukocytes.

Its subcellular location is the cell membrane. Functionally, orphan receptor; could be a chemoattractant receptor. The sequence is that of Probable G-protein coupled receptor 33 (GPR33) from Homo sapiens (Human).